A 702-amino-acid chain; its full sequence is Exodeoxyribonuclease 1 (702 aa).

The segment at 1–96 (MGIQGLLPQL…STESKRRDKR (96 aa)) is N-domain. Mg(2+) is bound by residues Asp-30, Asp-78, Glu-150, Asp-152, Asp-171, Asp-173, and Asp-227. Residues 114 to 247 (NAMDYFQKCV…ITAMKLVRRF (134 aa)) form an I-domain region. Ser-372 carries the post-translational modification Phosphoserine. Disordered stretches follow at residues 465 to 571 (SIQD…SQRS) and 660 to 685 (SFNS…SQAR). Residues 474-498 (NSQSLEEPVSESQLSTQIPSSFITT) are compositionally biased toward polar residues. Acidic residues-rich tracts occupy residues 500–518 (LEDD…SDIE) and 535–550 (NTDD…DYSE). Positions 558–571 (TSSTTSFPGSSQRS) are enriched in low complexity. A compositionally biased stretch (basic and acidic residues) spans 667–678 (LHEESKKRDIET).

The protein belongs to the XPG/RAD2 endonuclease family. EXO1 subfamily. As to quaternary structure, interacts with mismatch repair protein MSH2. The cofactor is Mg(2+).

It is found in the nucleus. Its activity is regulated as follows. Inactivated by calcium and zinc ions. Functionally, 5'-&gt;3' double-stranded DNA exonuclease involved in mismatch repair and eventually also in mitotic recombination between direct repeats. Also has a minor role in the correction of large DNA mismatches that occur in the heteroduplex DNA during meiotic recombination at the HIS4 locus. This is Exodeoxyribonuclease 1 (EXO1) from Saccharomyces cerevisiae (strain ATCC 204508 / S288c) (Baker's yeast).